Consider the following 508-residue polypeptide: Mitochondrial distribution and morphology protein 10 (508 aa).

The tract at residues 160 to 195 (PAHPTSTRPTPPQTPPSHTRQPSEPSTPAPSPTPGN) is disordered.

Belongs to the MDM10 family. In terms of assembly, component of the ER-mitochondria encounter structure (ERMES) or MDM complex, composed of MMM1, MDM10, MDM12 and MDM34. Associates with the mitochondrial outer membrane sorting assembly machinery SAM(core) complex.

It is found in the mitochondrion outer membrane. Functionally, component of the ERMES/MDM complex, which serves as a molecular tether to connect the endoplasmic reticulum and mitochondria. Components of this complex are involved in the control of mitochondrial shape and protein biogenesis and may function in phospholipid exchange. MDM10 is involved in the late assembly steps of the general translocase of the mitochondrial outer membrane (TOM complex). Functions in the TOM40-specific route of the assembly of outer membrane beta-barrel proteins, including the association of TOM40 with the receptor TOM22 and small TOM proteins. Can associate with the SAM(core) complex as well as the MDM12-MMM1 complex, both involved in late steps of the major beta-barrel assembly pathway, that is responsible for biogenesis of all outer membrane beta-barrel proteins. May act as a switch that shuttles between both complexes and channels precursor proteins into the TOM40-specific pathway. Plays a role in mitochondrial morphology and in the inheritance of mitochondria. This is Mitochondrial distribution and morphology protein 10 from Cryptococcus neoformans var. neoformans serotype D (strain JEC21 / ATCC MYA-565) (Filobasidiella neoformans).